A 118-amino-acid chain; its full sequence is Large ribosomal subunit protein bL20 (118 aa).

This sequence belongs to the bacterial ribosomal protein bL20 family.

Its function is as follows. Binds directly to 23S ribosomal RNA and is necessary for the in vitro assembly process of the 50S ribosomal subunit. It is not involved in the protein synthesizing functions of that subunit. The polypeptide is Large ribosomal subunit protein bL20 (Psychromonas ingrahamii (strain DSM 17664 / CCUG 51855 / 37)).